The following is a 252-amino-acid chain: Pyridoxine 5'-phosphate synthase (252 aa).

Residues Asn8 and Arg19 each coordinate 3-amino-2-oxopropyl phosphate. His44 serves as the catalytic Proton acceptor. Residues Arg46 and His51 each contribute to the 1-deoxy-D-xylulose 5-phosphate site. The active-site Proton acceptor is the Glu75. Thr110 serves as a coordination point for 1-deoxy-D-xylulose 5-phosphate. His201 acts as the Proton donor in catalysis. Residues Asp202 and 224–225 (GH) contribute to the 3-amino-2-oxopropyl phosphate site.

Belongs to the PNP synthase family. In terms of assembly, homooctamer; tetramer of dimers.

Its subcellular location is the cytoplasm. It carries out the reaction 3-amino-2-oxopropyl phosphate + 1-deoxy-D-xylulose 5-phosphate = pyridoxine 5'-phosphate + phosphate + 2 H2O + H(+). The protein operates within cofactor biosynthesis; pyridoxine 5'-phosphate biosynthesis; pyridoxine 5'-phosphate from D-erythrose 4-phosphate: step 5/5. In terms of biological role, catalyzes the complicated ring closure reaction between the two acyclic compounds 1-deoxy-D-xylulose-5-phosphate (DXP) and 3-amino-2-oxopropyl phosphate (1-amino-acetone-3-phosphate or AAP) to form pyridoxine 5'-phosphate (PNP) and inorganic phosphate. The chain is Pyridoxine 5'-phosphate synthase from Albidiferax ferrireducens (strain ATCC BAA-621 / DSM 15236 / T118) (Rhodoferax ferrireducens).